The chain runs to 407 residues: Peptidase T (407 aa).

H81 lines the Zn(2+) pocket. D83 is an active-site residue. D142 provides a ligand contact to Zn(2+). E176 serves as the catalytic Proton acceptor. Zn(2+) is bound by residues E177, D199, and H381.

It belongs to the peptidase M20B family. It depends on Zn(2+) as a cofactor.

Its subcellular location is the cytoplasm. It catalyses the reaction Release of the N-terminal residue from a tripeptide.. Its function is as follows. Cleaves the N-terminal amino acid of tripeptides. In Streptococcus pneumoniae (strain Taiwan19F-14), this protein is Peptidase T.